Reading from the N-terminus, the 330-residue chain is Transcription factor TGA5 (330 aa).

The span at 1–13 shows a compositional bias: polar residues; the sequence is MGDTSPRTSVSTD. A disordered region spans residues 1–64; the sequence is MGDTSPRTSV…REAARKSRLR (64 aa). Residues 35–47 are compositionally biased toward basic and acidic residues; it reads SSDRSKSKMDQKT. The bZIP domain maps to 44–107; it reads DQKTLRRLAQ…SSGDQAHSTA (64 aa). 2 coiled-coil regions span residues 45-98 and 211-244; these read QKTL…FISS and EQQSLDINNLQQSSQQAEDALSQGMDNLQQSLAD. Positions 46–66 are basic motif; sequence KTLRRLAQNREAARKSRLRKK. Residues 72–86 form a leucine-zipper region; sequence LENSRLKLTQLEQEL. Positions 111–327 constitute a DOG1 domain; the sequence is AMAFDVEYRR…RALSSLWLAR (217 aa).

Belongs to the bZIP family. In terms of assembly, binds DNA as a dimer. Interaction with the Dof domain protein OBP1 enhances the binding to the ocs element. Interacts with NPR1, NPR3 and NPR4. In terms of tissue distribution, predominantly expressed in roots.

It is found in the nucleus. Its function is as follows. Transcriptional activator that binds specifically to the DNA sequence 5'-TGACG-3'. Recognizes ocs elements like the as-1 motif of the cauliflower mosaic virus 35S promoter. Binding to the as-1-like cis elements mediate auxin- and salicylic acid-inducible transcription. May be involved in the induction of the systemic acquired resistance (SAR) via its interaction with NPR1. Could also bind to the Hex-motif (5'-TGACGTGG-3') another cis-acting element found in plant histone promoters. This chain is Transcription factor TGA5 (TGA5), found in Arabidopsis thaliana (Mouse-ear cress).